Consider the following 171-residue polypeptide: UPF0725 protein At3g25080 (171 aa).

It belongs to the UPF0725 (EMB2204) family.

The protein is UPF0725 protein At3g25080 of Arabidopsis thaliana (Mouse-ear cress).